A 424-amino-acid chain; its full sequence is L-rhamnose isomerase (424 aa).

Residues histidine 261, aspartate 293, and aspartate 295 each coordinate Mn(2+).

This sequence belongs to the rhamnose isomerase family. Mn(2+) is required as a cofactor.

The protein localises to the cytoplasm. It catalyses the reaction L-rhamnopyranose = L-rhamnulose. The protein operates within carbohydrate degradation; L-rhamnose degradation; glycerone phosphate from L-rhamnose: step 1/3. Its function is as follows. Catalyzes the interconversion of L-rhamnose and L-rhamnulose. The chain is L-rhamnose isomerase from Bacillus subtilis (strain 168).